The sequence spans 301 residues: Nucleosome assembly protein 1;3 (301 aa).

Positions 15–69 (VETLKNKLQALAEQHVDVLESLAPVVRKRVDVLIEIQSQHDELEAKFLEEKSALE) form a coiled coil. The Nuclear export signal signature appears at 36–51 (LAPVVRKRVDVLIEIQ). Positions 279 to 301 (EDYGASWVDDEEDDDDEYSDEEA) are disordered. Ser297 carries the phosphoserine; by CK2 modification.

Belongs to the nucleosome assembly protein (NAP) family.

It localises to the nucleus. Its subcellular location is the cytoplasm. May modulate chromatin structure by regulation of nucleosome assembly/disassembly. This chain is Nucleosome assembly protein 1;3 (NAP1;3), found in Oryza sativa subsp. indica (Rice).